Here is a 570-residue protein sequence, read N- to C-terminus: Hydroxylamine reductase (570 aa).

Residues C5, C8, C17, and C23 each coordinate [4Fe-4S] cluster. Hybrid [4Fe-2O-2S] cluster-binding residues include H266, E290, C334, C425, C453, C478, E513, and K515. Residue C425 is modified to Cysteine persulfide.

It belongs to the HCP family. The cofactor is [4Fe-4S] cluster. It depends on hybrid [4Fe-2O-2S] cluster as a cofactor.

It is found in the cytoplasm. It catalyses the reaction A + NH4(+) + H2O = hydroxylamine + AH2 + H(+). Catalyzes the reduction of hydroxylamine to form NH(3) and H(2)O. The chain is Hydroxylamine reductase from Clostridium botulinum (strain Langeland / NCTC 10281 / Type F).